The following is a 279-amino-acid chain: Small ribosomal subunit protein uS2 (279 aa).

Composition is skewed to acidic residues over residues 1-18 (MTENDNEVVEVVDDDEAV), 28-42 (TATEAEADTETDESN), and 65-81 (ADAEPDDELEGPTFDED). The tract at residues 1-81 (MTENDNEVVE…ELEGPTFDED (81 aa)) is disordered.

Belongs to the universal ribosomal protein uS2 family.

In Haloquadratum walsbyi (strain DSM 16790 / HBSQ001), this protein is Small ribosomal subunit protein uS2.